Consider the following 702-residue polypeptide: Penicillin-binding protein activator LpoA (702 aa).

The N-terminal stretch at 1–26 (MVPSTFLRSKPARCLPVLLATLIFAG) is a signal peptide. Cysteine 27 carries N-palmitoyl cysteine lipidation. Residue cysteine 27 is the site of S-diacylglycerol cysteine attachment. The segment at 327-378 (GSRADPVQAPTQDQAAPAAEPAAQAPATSTTPQTTASPATQPVTAPAAQPQP) is disordered. A compositionally biased stretch (low complexity) spans 330–378 (ADPVQAPTQDQAAPAAEPAAQAPATSTTPQTTASPATQPVTAPAAQPQP).

This sequence belongs to the LpoA family. As to quaternary structure, interacts with PBP1a.

The protein resides in the cell outer membrane. Functionally, regulator of peptidoglycan synthesis that is essential for the function of penicillin-binding protein 1A (PBP1a). This chain is Penicillin-binding protein activator LpoA, found in Klebsiella pneumoniae subsp. pneumoniae (strain ATCC 700721 / MGH 78578).